Reading from the N-terminus, the 456-residue chain is Major facilitator superfamily domain-containing protein 10 (456 aa).

3 consecutive transmembrane segments (helical) span residues 25 to 45, 87 to 107, and 114 to 136; these read VIIVLFLGLLLDLLAFTLLLP, VLFGGLIGSAFSLLQFFSAPL, and YLGRRPVMMLSLTGLAISYAVWA. An N-linked (GlcNAc...) asparagine glycan is attached at N159. The next 8 membrane-spanning stretches (helical) occupy residues 179 to 199, 203 to 223, 278 to 298, 311 to 328, 345 to 365, 366 to 386, 403 to 423, and 424 to 444; these read AVIGVAFSLAFTLGPMLGAFL, MVPWISLLFAISDMLFIFCFL, LVYFLYLFLFSGLEYTLSFLA, KMFFFIGLTMATIQGTYA, LLLVPAFLLIGWAHSLPTLGL, GLMLYSFAAAVVVPGLSTMVS, SLGALGRALGPVVAASVYWLT, and GAQVCFTVCSALFLLPFLLLW.

The protein belongs to the major facilitator superfamily. As to expression, esxpressed in luminal membrane of renal tubules. Expressed at the surface of eosinophils (at protein level).

It is found in the nucleus inner membrane. It localises to the cell membrane. In terms of biological role, probable organic anion transporter which may serve as a transporter for some non-steroidal anti-inflammatory drugs (NSAIDs) as well as other organic anions across the luminal membranes of renal proximal tubules at the final excretion step into the urine. In Mus musculus (Mouse), this protein is Major facilitator superfamily domain-containing protein 10 (Mfsd10).